Reading from the N-terminus, the 431-residue chain is Glutamate-1-semialdehyde 2,1-aminomutase (431 aa).

Position 269 is an N6-(pyridoxal phosphate)lysine (lysine 269).

This sequence belongs to the class-III pyridoxal-phosphate-dependent aminotransferase family. HemL subfamily. As to quaternary structure, homodimer. Pyridoxal 5'-phosphate serves as cofactor.

Its subcellular location is the cytoplasm. The catalysed reaction is (S)-4-amino-5-oxopentanoate = 5-aminolevulinate. It functions in the pathway porphyrin-containing compound metabolism; protoporphyrin-IX biosynthesis; 5-aminolevulinate from L-glutamyl-tRNA(Glu): step 2/2. It participates in porphyrin-containing compound metabolism; chlorophyll biosynthesis. This chain is Glutamate-1-semialdehyde 2,1-aminomutase, found in Chlorobium phaeobacteroides (strain DSM 266 / SMG 266 / 2430).